A 252-amino-acid chain; its full sequence is Pantothenate synthetase (252 aa).

Residue 29-36 coordinates ATP; the sequence is MGNLHAGH. His-36 functions as the Proton donor in the catalytic mechanism. Residue Gln-60 coordinates (R)-pantoate. Gln-60 contacts beta-alanine. Position 146-149 (146-149) interacts with ATP; that stretch reads GEKD. A (R)-pantoate-binding site is contributed by Gln-152. ATP is bound by residues Val-175 and 183-186; that span reads CSSR.

It belongs to the pantothenate synthetase family. In terms of assembly, homodimer.

It is found in the cytoplasm. It carries out the reaction (R)-pantoate + beta-alanine + ATP = (R)-pantothenate + AMP + diphosphate + H(+). It participates in cofactor biosynthesis; (R)-pantothenate biosynthesis; (R)-pantothenate from (R)-pantoate and beta-alanine: step 1/1. Functionally, catalyzes the condensation of pantoate with beta-alanine in an ATP-dependent reaction via a pantoyl-adenylate intermediate. The sequence is that of Pantothenate synthetase from Legionella pneumophila (strain Corby).